The following is a 508-amino-acid chain: Maturase K (508 aa).

The protein belongs to the intron maturase 2 family. MatK subfamily.

The protein localises to the plastid. The protein resides in the chloroplast. Usually encoded in the trnK tRNA gene intron. Probably assists in splicing its own and other chloroplast group II introns. The polypeptide is Maturase K (Amburana cearensis (Cerejeira)).